The primary structure comprises 401 residues: Bone morphogenetic protein 4 (401 aa).

The signal sequence occupies residues 1–19 (MIPGNRMLMVILLSQVLLG). The propeptide occupies 20–287 (GTNYASLIPD…GHALTRRSKR (268 aa)). Asparagine 141, asparagine 204, and asparagine 238 each carry an N-linked (GlcNAc...) asparagine glycan. The disordered stretch occupies residues 279–299 (HALTRRSKRSPKQQRPRKKNK). The segment covering 280–299 (ALTRRSKRSPKQQRPRKKNK) has biased composition (basic residues). Disulfide bonds link cysteine 301/cysteine 366, cysteine 330/cysteine 398, and cysteine 334/cysteine 400. Residues asparagine 343 and asparagine 358 are each glycosylated (N-linked (GlcNAc...) asparagine).

This sequence belongs to the TGF-beta family. In terms of assembly, homodimer; disulfide-linked. Forms heterodimers with the TGF-beta family member derriere. Part of a complex consisting of twsg1 and chrd. Interacts with tsku.

The protein resides in the secreted. It is found in the extracellular space. It localises to the extracellular matrix. Its function is as follows. Posterior-ventralizing factor in Xenopus mesoderm induction. Induces posteroventral mesoderm and counteracts dorsalizing signals such as activin. This chain is Bone morphogenetic protein 4 (bmp4), found in Xenopus laevis (African clawed frog).